The following is a 252-amino-acid chain: Flap endonuclease Xni (252 aa).

D105 serves as a coordination point for Mg(2+). The 5'-3' exonuclease domain maps to 161 to 251 (VESTQFIDYL…NVNLKQFRIE (91 aa)). Residues L172, A173, P181, V183, and I186 each coordinate K(+). The tract at residues 185–190 (GIGPKS) is interaction with DNA.

This sequence belongs to the Xni family. Mg(2+) is required as a cofactor. The cofactor is K(+).

Functionally, has flap endonuclease activity. During DNA replication, flap endonucleases cleave the 5'-overhanging flap structure that is generated by displacement synthesis when DNA polymerase encounters the 5'-end of a downstream Okazaki fragment. In Shewanella halifaxensis (strain HAW-EB4), this protein is Flap endonuclease Xni.